A 79-amino-acid polypeptide reads, in one-letter code: Conotoxin ArMSGL-0123 (79 aa).

Residues 1 to 20 form the signal peptide; the sequence is MSRLGIMVLTLLLLVFIVTS. The propeptide occupies 21–44; it reads HQDAGEKQATKRAAVNFRWRRSFT. 3 disulfides stabilise this stretch: Cys52/Cys64, Cys56/Cys73, and Cys63/Cys77. The residue at position 78 (Leu78) is a Leucine amide.

It belongs to the conotoxin O3 superfamily. In terms of tissue distribution, expressed by the venom duct.

The protein localises to the secreted. The sequence is that of Conotoxin ArMSGL-0123 from Conus arenatus (Sand-dusted cone).